A 124-amino-acid chain; its full sequence is Small ribosomal subunit protein uS13 (124 aa).

Residues 95–124 (GLPVRGQRTHTNARTRKGPRRSVMGKRKKA) form a disordered region.

The protein belongs to the universal ribosomal protein uS13 family. Part of the 30S ribosomal subunit. Forms a loose heterodimer with protein S19. Forms two bridges to the 50S subunit in the 70S ribosome.

Functionally, located at the top of the head of the 30S subunit, it contacts several helices of the 16S rRNA. In the 70S ribosome it contacts the 23S rRNA (bridge B1a) and protein L5 of the 50S subunit (bridge B1b), connecting the 2 subunits; these bridges are implicated in subunit movement. Contacts the tRNAs in the A and P-sites. This chain is Small ribosomal subunit protein uS13, found in Syntrophobacter fumaroxidans (strain DSM 10017 / MPOB).